Here is a 148-residue protein sequence, read N- to C-terminus: Lysozyme C (148 aa).

A signal peptide spans 1–18; sequence MKALLLLGLLLLSVTVQG. The C-type lysozyme domain maps to 19 to 148; sequence KIFERCDLAR…VSQYVRNCGV (130 aa). 4 disulfide bridges follow: Cys-24/Cys-146, Cys-48/Cys-134, Cys-83/Cys-99, and Cys-95/Cys-113. Active-site residues include Glu-53 and Asp-71.

This sequence belongs to the glycosyl hydrolase 22 family. Monomer.

It catalyses the reaction Hydrolysis of (1-&gt;4)-beta-linkages between N-acetylmuramic acid and N-acetyl-D-glucosamine residues in a peptidoglycan and between N-acetyl-D-glucosamine residues in chitodextrins.. Lysozymes have primarily a bacteriolytic function; those in tissues and body fluids are associated with the monocyte-macrophage system and enhance the activity of immunoagents. In Halichoerus grypus (Gray seal), this protein is Lysozyme C (LYZ).